Consider the following 289-residue polypeptide: Probable endonuclease 4 (289 aa).

Zn(2+) is bound by residues histidine 74, histidine 115, glutamate 150, aspartate 184, histidine 187, histidine 218, aspartate 231, histidine 233, and glutamate 263.

This sequence belongs to the AP endonuclease 2 family. Requires Zn(2+) as cofactor.

It carries out the reaction Endonucleolytic cleavage to 5'-phosphooligonucleotide end-products.. Endonuclease IV plays a role in DNA repair. It cleaves phosphodiester bonds at apurinic or apyrimidinic (AP) sites, generating a 3'-hydroxyl group and a 5'-terminal sugar phosphate. This is Probable endonuclease 4 from Mycoplasma capricolum subsp. capricolum (strain California kid / ATCC 27343 / NCTC 10154).